Consider the following 107-residue polypeptide: MRTLMLIILSILIYLSSAKPVFGPIGVVEKHKIAKMLQNEQKSLQMLEEEQALLEKVVETLSNDIEEKEEKIEKLRRSYTNGNGALANIYEDYRSGFKSGIGARPGR.

An N-terminal signal peptide occupies residues 1 to 18 (MRTLMLIILSILIYLSSA).

This is an uncharacterized protein from Caenorhabditis elegans.